A 117-amino-acid chain; its full sequence is MSASPTARQAITQALPMITRKVVISDPIQMPEVYSSTPGGTLYSTTPGGTKLIYERAFMKNLRGSPLSQTPPSNVPSCLLRGTPRTPFRKCVPVPTELIKQTKSLKIEDQEQFQLDL.

Thr37 and Thr46 each carry phosphothreonine. The YXXXXLphi motif; atypical signature appears at 54-60; the sequence is YERAFMK. Ser65 carries the phosphoserine modification. Thr70 is modified (phosphothreonine).

The protein belongs to the eIF4E-binding protein family. In terms of assembly, hypophosphorylated Thor/4E-BP competes with eIF4G1 to interact with eIF4E1; insulin stimulated Akt1 or Tor phosphorylation of Thor/4E-BP causes dissociation of the complex allowing eIF4G1 to bind and consequent initiation of translation. In terms of processing, phosphorylation at Thr-37, Thr-46, Ser-65 and Thr-70, corresponding to the hyperphosphorylated form, impairs its ability to prevent the interaction between eIF4G1 and eIF4E1, without affecting its interaction with free eIF4E1. Phosphorylated in rtesponse to insulin. Phosphorylation at Thr-46 is regulated by Tor and constitutes the major phosphorylation event that regulates activity. In terms of tissue distribution, widely expressed.

In terms of biological role, repressor of translation initiation that regulates eIF4E1 activity by preventing its assembly into the eIF4F complex. Hypophosphorylated form competes with eIF4G1 and strongly binds to eIF4E1, leading to repress translation. In contrast, hyperphosphorylated form dissociates from eIF4E1, allowing interaction between eIF4G1 and eIF4E1, leading to initiation of translation. Acts as a regulator of various biological processes, such as innate immunity, cell growth or synaptic transmission. Acts downstream of phosphoinositide-3-kinase (PI3K) to regulate cell growth. Extends lifespan upon dietary restriction by regulating the mitochondrial translation. Acts as a regulator of lifespan in response to cold by regulating the mitochondrial translation. Acts as a negative regulator of presynaptic release of neurotransmitter in motor neurons: Thor expression is induced in response to insulin signaling, leading to prevent of translation of complexin (cpx), a protein known to regulate the exocytosis of synaptic vesicles. Acts as a negative regulator of synaptic strength at the neuromuscular junction: Thor expression in response to acute fasting prevents translation, thereby suppressing retrograde synaptic enhancement. This Drosophila melanogaster (Fruit fly) protein is Eukaryotic translation initiation factor 4E-binding protein.